A 155-amino-acid polypeptide reads, in one-letter code: Transcription antitermination protein NusB (155 aa).

The protein belongs to the NusB family.

Its function is as follows. Involved in transcription antitermination. Required for transcription of ribosomal RNA (rRNA) genes. Binds specifically to the boxA antiterminator sequence of the ribosomal RNA (rrn) operons. This chain is Transcription antitermination protein NusB, found in Halorhodospira halophila (strain DSM 244 / SL1) (Ectothiorhodospira halophila (strain DSM 244 / SL1)).